Consider the following 403-residue polypeptide: RNA-binding motif, single-stranded-interacting protein 1 (403 aa).

A disordered region spans residues 30-56 (PAHPMAPPSPSTTSSNNNSSSSSNSGW). Low complexity predominate over residues 40 to 54 (STTSSNNNSSSSSNS). 2 RRM domains span residues 62–135 (TNLY…MAKQ) and 141–226 (TNLY…FADG). A Phosphothreonine modification is found at T208. Residues 382–395 (GQQQVAVETSNDHS) show a composition bias toward polar residues. Residues 382–403 (GQQQVAVETSNDHSPYTFPPNK) form a disordered region.

In terms of tissue distribution, ubiquitous. Expressed in all tissues except testis.

It is found in the nucleus. Functionally, single-stranded DNA binding protein that interacts with the region upstream of the MYC gene. Binds specifically to the DNA sequence motif 5'-[AT]CT[AT][AT]T-3'. Probably has a role in DNA replication. The polypeptide is RNA-binding motif, single-stranded-interacting protein 1 (Rbms1) (Mus musculus (Mouse)).